We begin with the raw amino-acid sequence, 123 residues long: DNA-directed RNA polymerase I subunit RPA12 (123 aa).

The Zn(2+) site is built by C17, C20, C35, C38, C84, and C87. The segment at 17 to 38 (CPDCGSVLPLPGVQDTVICPRC) adopts a C4-type zinc-finger fold. Residues 80–120 (VDRRCSRCGHEGMAYYTRQMRSADEGQTVFYTCINCKFQEK) form a TFIIS-type zinc finger. Residues 103 to 104 (DE) carry the Hairpin motif. 2 residues coordinate Zn(2+): C112 and C115.

It belongs to the archaeal RpoM/eukaryotic RPA12/RPB9/RPC11 RNA polymerase family. Component of the RNA polymerase I (Pol I) complex consisting of 13 subunits: a ten-subunit catalytic core composed of POLR1A/RPA1, POLR1B/RPA2, POLR1C/RPAC1, POLR1D/RPAC2, POLR1H/RPA12, POLR2E/RPABC1, POLR2F/RPABC2, POLR2H/RPABC3, POLR2K/RPABC4 and POLR2L/RPABC5; a mobile stalk subunit POLR1F/RPA43 protruding from the core and additional subunits homologous to general transcription factors POLR1E/RPA49 and POLR1G/RPA34. Part of Pol I pre-initiation complex (PIC), in which Pol I core assembles with RRN3 and promoter-bound UTBF and SL1/TIF-IB complex.

The protein localises to the nucleus. The protein resides in the nucleolus. Functionally, core component of RNA polymerase I (Pol I), a DNA-dependent RNA polymerase which synthesizes ribosomal RNA precursors using the four ribonucleoside triphosphates as substrates. Can mediate Pol I proofreading of the nascent RNA transcript. Anchors into the Pol I active site to monitor transcription fidelity and cleave mis-incorporated 5'-ribonucleotides. The polypeptide is DNA-directed RNA polymerase I subunit RPA12 (Rattus norvegicus (Rat)).